Consider the following 184-residue polypeptide: Cytidylate kinase (184 aa).

ATP is bound at residue 8-16 (GQPGSGKTT).

The protein belongs to the cytidylate kinase family. Type 2 subfamily.

It localises to the cytoplasm. The catalysed reaction is CMP + ATP = CDP + ADP. It catalyses the reaction dCMP + ATP = dCDP + ADP. This chain is Cytidylate kinase, found in Pyrobaculum arsenaticum (strain DSM 13514 / JCM 11321 / PZ6).